The following is a 617-amino-acid chain: MALLQIAEPGQSSAPHEHKRAAGIDLGTTNSLVASVRSGTADTLKDAQGRSLLPSIVNYANEEAIVGYAAKALSESQPQDTIISVKRLLGRSLTDIQTRYPSLPYRFKASENGLPVLQTTQGDKNPIEVSADILKVLAKRAEESLGGELSGVVITVPAYFDDAQRAGTKDAAKLAGLHVLRLLNEPTAAAIAYGLDSGQEGVIAVYDLGGGTFDISILRLSKGVFEVLATGGDSALGGDDFDHLLADFLAEQVGLETPLSAEKNRTLLNIATATKIAFSEQDSVEVEVFGWKGVVTREQFEELIRPLVKKTLMSCRRALKDADVEADEVLEVVMVGGSTRTLLVREMVGEFFGRTPLTNINPDEVVAIGAGIQADILAGNKPDSEMLLLDVIPLSLGIETMGGLVEKIIPRNTTIPVARAQEFTTFKDGQTAMSVHIVQGEREMVDDCRSLARFSLKGIPPMAAGAAHIRVTYQVDADGLLSVTAMEKSTGVQSEIQVKPSYGLSDDEVANMLRDSMTYAKEDMQARALAEQRVEADRVIEGLIAAMQADGDELLSEAEKATLLQAIESLIELRNGNEANAIEQGIKDTDKASQDFASRRMDKSIRAALAGQSIDTI.

The tract at residues 1 to 23 is disordered; the sequence is MALLQIAEPGQSSAPHEHKRAAG.

This sequence belongs to the heat shock protein 70 family.

Chaperone involved in the maturation of iron-sulfur cluster-containing proteins. Has a low intrinsic ATPase activity which is markedly stimulated by HscB. The chain is Chaperone protein HscA homolog from Vibrio vulnificus (strain YJ016).